A 370-amino-acid polypeptide reads, in one-letter code: 3-dehydroquinate synthase (370 aa).

Residues 112-116 (GVIGD), 136-137 (TT), Lys-149, Lys-158, and 176-179 (TLAT) each bind NAD(+). The Zn(2+) site is built by Glu-191, His-254, and His-276.

Belongs to the sugar phosphate cyclases superfamily. Dehydroquinate synthase family. Co(2+) is required as a cofactor. The cofactor is Zn(2+). Requires NAD(+) as cofactor.

It localises to the cytoplasm. It carries out the reaction 7-phospho-2-dehydro-3-deoxy-D-arabino-heptonate = 3-dehydroquinate + phosphate. It participates in metabolic intermediate biosynthesis; chorismate biosynthesis; chorismate from D-erythrose 4-phosphate and phosphoenolpyruvate: step 2/7. Its function is as follows. Catalyzes the conversion of 3-deoxy-D-arabino-heptulosonate 7-phosphate (DAHP) to dehydroquinate (DHQ). This is 3-dehydroquinate synthase from Xylella fastidiosa (strain M23).